The primary structure comprises 379 residues: Programmed cell death protein 2-like (379 aa).

In Gallus gallus (Chicken), this protein is Programmed cell death protein 2-like (PDCD2L).